A 180-amino-acid polypeptide reads, in one-letter code: Ribosome-recycling factor (180 aa).

Belongs to the RRF family.

It localises to the cytoplasm. Its function is as follows. Responsible for the release of ribosomes from messenger RNA at the termination of protein biosynthesis. May increase the efficiency of translation by recycling ribosomes from one round of translation to another. The sequence is that of Ribosome-recycling factor from Chlamydia caviae (strain ATCC VR-813 / DSM 19441 / 03DC25 / GPIC) (Chlamydophila caviae).